Consider the following 288-residue polypeptide: Small ribosomal subunit protein uS3 (288 aa).

A KH type-2 domain is found at 38–106 (IRRMMSKGLE…QVQLNIIEVK (69 aa)). Residues 209 to 288 (PGRETPAEAP…TQPAETQQEG (80 aa)) are disordered. The span at 219-232 (SRPRRERGDRSERP) shows a compositional bias: basic and acidic residues. Low complexity predominate over residues 249–264 (AGRAAATTIAQAAETP). The span at 277–288 (AATQPAETQQEG) shows a compositional bias: polar residues.

Belongs to the universal ribosomal protein uS3 family. Part of the 30S ribosomal subunit. Forms a tight complex with proteins S10 and S14.

Functionally, binds the lower part of the 30S subunit head. Binds mRNA in the 70S ribosome, positioning it for translation. The protein is Small ribosomal subunit protein uS3 of Salinispora tropica (strain ATCC BAA-916 / DSM 44818 / JCM 13857 / NBRC 105044 / CNB-440).